The following is an 89-amino-acid chain: Small ribosomal subunit protein uS15 (89 aa).

This sequence belongs to the universal ribosomal protein uS15 family. As to quaternary structure, part of the 30S ribosomal subunit. Forms a bridge to the 50S subunit in the 70S ribosome, contacting the 23S rRNA.

Its function is as follows. One of the primary rRNA binding proteins, it binds directly to 16S rRNA where it helps nucleate assembly of the platform of the 30S subunit by binding and bridging several RNA helices of the 16S rRNA. Functionally, forms an intersubunit bridge (bridge B4) with the 23S rRNA of the 50S subunit in the ribosome. This chain is Small ribosomal subunit protein uS15, found in Shewanella sp. (strain ANA-3).